Reading from the N-terminus, the 129-residue chain is RxLR effector protein SFI6 (129 aa).

A signal peptide spans 1–16; it reads MTLVVLATGLLASGTA. The RxLR-dEER motif lies at 42-64; the sequence is RFLRSHQITDDKVEINEHGEEER.

The protein belongs to the RxLR effector family.

It is found in the secreted. The protein localises to the host cytoplasm. The protein resides in the host cell membrane. Functionally, effector that suppresses flg22-induced post-translational MAP kinase activation in tomato but not in Arabidopsis. The perception of highly conserved pathogen- or microbe-associated molecular patterns (PAMPs/MAMPs), such as flg22, triggers converging signaling pathways recruiting MAP kinase cascades and inducing transcriptional re-programming, yielding a generic antimicrobial response. This is RxLR effector protein SFI6 from Phytophthora infestans (strain T30-4) (Potato late blight agent).